We begin with the raw amino-acid sequence, 224 residues long: PKHD-type hydroxylase Shewmr4_3244 (224 aa).

Residues 78-176 form the Fe2OG dioxygenase domain; the sequence is QFYPPLFNRY…RTAAFMWLQS (99 aa). The Fe cation site is built by H96, D98, and H157. 2-oxoglutarate is bound at residue R167.

Fe(2+) is required as a cofactor. Requires L-ascorbate as cofactor.

The protein is PKHD-type hydroxylase Shewmr4_3244 of Shewanella sp. (strain MR-4).